Consider the following 508-residue polypeptide: General transcription factor IIF subunit 1 (508 aa).

Ala2 carries the post-translational modification N-acetylalanine. Position 156 is a phosphothreonine (Thr156). The disordered stretch occupies residues 177-446 (MQQRRLKDQD…TPSSGDVQVT (270 aa)). Phosphoserine is present on residues Ser217, Ser218, Ser221, and Ser224. The span at 232–251 (SKAKKKAPVTKAGRKKKKKK) shows a compositional bias: basic residues. 2 stretches are compositionally biased toward acidic residues: residues 255–270 (DEAFEDSDDGDFEGQE) and 303–325 (EQSESSEESEEEKPPEEDKEEEE). At Thr331 the chain carries Phosphothreonine. Residues 343 to 355 (DDSDSSEESDIDS) show a composition bias toward acidic residues. The span at 364-374 (AKKKTPPKRER) shows a compositional bias: basic residues. A phosphoserine mark is found at Ser377, Ser380, Ser381, and Ser385. A compositionally biased stretch (polar residues) spans 378-388 (GGSSKGTSRPG). Thr389 is modified (phosphothreonine). The segment covering 389 to 406 (TPSAEAASTSSTLRAAAS) has biased composition (low complexity). Ser391 is modified (phosphoserine). Lys407 is subject to N6-acetyllysine. The segment covering 428-443 (GPQSLSGKSTPSSGDV) has biased composition (polar residues). Phosphoserine occurs at positions 431, 433, and 436. The residue at position 437 (Thr437) is a Phosphothreonine. A Phosphoserine modification is found at Ser440.

Belongs to the TFIIF alpha subunit family. In terms of assembly, heterodimer of an alpha and a beta subunit. Interacts with GTF2F2, CTDP1, TAF6/TAFII80 and URI1. Interacts with GTF2B (via C-terminus and preferentially via acetylated form); this interaction prevents binding of GTF2B to GTF2F2. Part of TBP-based Pol II pre-initiation complex (PIC), in which Pol II core assembles with general transcription factors and other specific initiation factors including GTF2E1, GTF2E2, GTF2F1, GTF2F2, TCEA1, ERCC2, ERCC3, GTF2H2, GTF2H3, GTF2H4, GTF2H5, GTF2A1, GTF2A2, GTF2B and TBP; this large multi-subunit PIC complex mediates DNA unwinding and targets Pol II core to the transcription start site where the first phosphodiester bond forms. Phosphorylated on Ser and other residues by TAF1 and casein kinase II-like kinases.

It localises to the nucleus. TFIIF is a general transcription initiation factor that binds to RNA polymerase II and helps to recruit it to the initiation complex in collaboration with TFIIB. It promotes transcription elongation. This chain is General transcription factor IIF subunit 1 (Gtf2f1), found in Mus musculus (Mouse).